Consider the following 284-residue polypeptide: L-ribulose-5-phosphate 3-epimerase UlaE (284 aa).

This sequence belongs to the L-ribulose-5-phosphate 3-epimerase family.

The enzyme catalyses L-ribulose 5-phosphate = L-xylulose 5-phosphate. Its pathway is cofactor degradation; L-ascorbate degradation; D-xylulose 5-phosphate from L-ascorbate: step 3/4. Its function is as follows. Catalyzes the isomerization of L-xylulose-5-phosphate to L-ribulose-5-phosphate. Is involved in the anaerobic L-ascorbate utilization. The polypeptide is L-ribulose-5-phosphate 3-epimerase UlaE (Salmonella typhimurium (strain LT2 / SGSC1412 / ATCC 700720)).